We begin with the raw amino-acid sequence, 527 residues long: GMP synthase [glutamine-hydrolyzing] (527 aa).

The Glutamine amidotransferase type-1 domain maps to 19-212 (KIIVLDYGSQ…AFSICGAKGD (194 aa)). Cys-96 acts as the Nucleophile in catalysis. Catalysis depends on residues His-186 and Glu-188. Residues 213–402 (WSMANFVDMQ…LGMPDEVVWR (190 aa)) enclose the GMPS ATP-PPase domain. ATP is bound at residue 240-246 (SGGVDSS).

As to quaternary structure, homodimer.

The catalysed reaction is XMP + L-glutamine + ATP + H2O = GMP + L-glutamate + AMP + diphosphate + 2 H(+). The protein operates within purine metabolism; GMP biosynthesis; GMP from XMP (L-Gln route): step 1/1. Its function is as follows. Catalyzes the synthesis of GMP from XMP. The chain is GMP synthase [glutamine-hydrolyzing] from Streptococcus thermophilus (strain CNRZ 1066).